Here is a 62-residue protein sequence, read N- to C-terminus: Small ribosomal subunit protein bS21 (62 aa).

The segment covering 40-52 (KPSVKRKLKSEAA) has biased composition (basic and acidic residues). The disordered stretch occupies residues 40 to 62 (KPSVKRKLKSEAARKRKNKRRRY). Basic residues predominate over residues 53–62 (RKRKNKRRRY).

It belongs to the bacterial ribosomal protein bS21 family.

This chain is Small ribosomal subunit protein bS21, found in Limosilactobacillus fermentum (strain NBRC 3956 / LMG 18251) (Lactobacillus fermentum).